The primary structure comprises 66 residues: Small ribosomal subunit protein bS21A (66 aa).

Over residues K34–K46 the composition is skewed to basic residues. A disordered region spans residues K34 to D66.

Belongs to the bacterial ribosomal protein bS21 family.

The sequence is that of Small ribosomal subunit protein bS21A from Geobacter sulfurreducens (strain ATCC 51573 / DSM 12127 / PCA).